We begin with the raw amino-acid sequence, 150 residues long: Small ribosomal subunit protein uS19y (150 aa).

Belongs to the universal ribosomal protein uS19 family.

Its subcellular location is the cytoplasm. This Arabidopsis thaliana (Mouse-ear cress) protein is Small ribosomal subunit protein uS19y (RPS15C).